Consider the following 718-residue polypeptide: MSASDLTSVQAAAPQGSRQILVTSALPYANGQIHIGHLVEYIQTDIWVRALRMHGHEVYYIGADDTHGTPIMLRAEKEGLTPKQLIDRVWTEHKRDFDSFGVSFDNFYSTDSDENRVLSEKIYLALQEAGLIAEREIEQAYDPVKEMFLPDRFIKGECPKCHAKDQYGDNCEVCGSTYLPTELLNPYSVVSGATPVRKTSKHYFFRLSDPRCESFLREWVSGLAQPEATNKMREWLGDAGEAKLADWDISRDAPYFGFEIPGAPGKYFYVWLDAPVGYYASFKNLCERNGIDFDAWIRPGSKAEQYHFIGKDILYFHTLFWPAMLEFSGHRTPTNVFAHGFLTVDGAKMSKSRGTFITAQSYIDTGLNPEWLRYYFAAKLNATMEDIDLNLDDFQARVNSDLVGKYVNIASRAAGFLIKRFDGRVQDSAMNHPLVAKLRDAIPQIAASYEAREYGRALRHTMELADEVNAYVDGAKPWDLAKDPANAVALHETCSVSLEAFRLLSLALKPVMPRVAAAVEAFFGIAPLAWADAAKPLSSAQPIKAYQHLMTRVDAKQIEALLAANRDSLQADAAGAAAGGANAAKDAKSNAKANAKPAVVNGADDAPISIDDFAKIDLRIAKIVACQAVEGSDKLLQLTLDVGEEKTRNVFSGIKSAYQPEQLVGKLTVMVANLAPRKMKFGLSEGMVLAASATDEKAEPGLYILEPHSGAKPGMRVK.

Positions 27–37 (PYANGQIHIGH) match the 'HIGH' region motif. The Zn(2+) site is built by Cys158, Cys161, Cys171, and Cys174. The 'KMSKS' region signature appears at 348–352 (KMSKS). Lys351 is a binding site for ATP. In terms of domain architecture, tRNA-binding spans 612–718 (DFAKIDLRIA…SGAKPGMRVK (107 aa)).

It belongs to the class-I aminoacyl-tRNA synthetase family. MetG type 1 subfamily. Homodimer. Zn(2+) serves as cofactor.

The protein resides in the cytoplasm. The enzyme catalyses tRNA(Met) + L-methionine + ATP = L-methionyl-tRNA(Met) + AMP + diphosphate. Its function is as follows. Is required not only for elongation of protein synthesis but also for the initiation of all mRNA translation through initiator tRNA(fMet) aminoacylation. In Burkholderia cenocepacia (strain ATCC BAA-245 / DSM 16553 / LMG 16656 / NCTC 13227 / J2315 / CF5610) (Burkholderia cepacia (strain J2315)), this protein is Methionine--tRNA ligase.